Reading from the N-terminus, the 898-residue chain is Serine/threonine-protein kinase PKH3 (898 aa).

The Protein kinase domain occupies 11 to 293; that stretch reads FIFKEELGHG…LEQIKRHPYF (283 aa). ATP-binding positions include 17 to 25 and lysine 41; that span reads LGHGSYSTV. Aspartate 138 functions as the Proton acceptor in the catalytic mechanism. 2 disordered regions span residues 435–484 and 675–850; these read PPKV…PSTE and DSKA…EKYS. Over residues 459-468 the composition is skewed to polar residues; the sequence is PLQTSSIPQK. Over residues 469–483 the composition is skewed to low complexity; the sequence is LSTSSASSALSAPST. The residue at position 696 (serine 696) is a Phosphoserine. Polar residues predominate over residues 697–721; it reads IGNNVTTLSYTAKNGSQNNAPQNDN. Over residues 723 to 738 the composition is skewed to basic and acidic residues; the sequence is GEEKPFRIPSSTKDRP. Composition is skewed to polar residues over residues 740–758, 771–782, and 789–803; these read ANST…NNAG, SAPSTNTYTNGS, and RPST…NILT. Phosphoserine is present on serine 753. Residues 804–817 are compositionally biased toward low complexity; that stretch reads SKKQGSSVFSPSSS. Residues 818–831 are compositionally biased toward polar residues; the sequence is TTKPQIKTTGYRQP. A Phosphoserine modification is found at serine 871.

The protein belongs to the protein kinase superfamily. Ser/Thr protein kinase family.

It carries out the reaction L-seryl-[protein] + ATP = O-phospho-L-seryl-[protein] + ADP + H(+). The enzyme catalyses L-threonyl-[protein] + ATP = O-phospho-L-threonyl-[protein] + ADP + H(+). In terms of biological role, serine/threonine-protein kinase which may phosphorylate the same targets substrates as PKH1 and PKH2, 2 upstream activators of PKC1. In Saccharomyces cerevisiae (strain ATCC 204508 / S288c) (Baker's yeast), this protein is Serine/threonine-protein kinase PKH3 (PKH3).